A 532-amino-acid chain; its full sequence is Bifunctional purine biosynthesis protein PurH (532 aa).

The MGS-like domain maps to 1 to 147 (MADRPIRQAL…KNHKDVAIVV (147 aa)).

Belongs to the PurH family.

The enzyme catalyses (6R)-10-formyltetrahydrofolate + 5-amino-1-(5-phospho-beta-D-ribosyl)imidazole-4-carboxamide = 5-formamido-1-(5-phospho-D-ribosyl)imidazole-4-carboxamide + (6S)-5,6,7,8-tetrahydrofolate. It carries out the reaction IMP + H2O = 5-formamido-1-(5-phospho-D-ribosyl)imidazole-4-carboxamide. The protein operates within purine metabolism; IMP biosynthesis via de novo pathway; 5-formamido-1-(5-phospho-D-ribosyl)imidazole-4-carboxamide from 5-amino-1-(5-phospho-D-ribosyl)imidazole-4-carboxamide (10-formyl THF route): step 1/1. It functions in the pathway purine metabolism; IMP biosynthesis via de novo pathway; IMP from 5-formamido-1-(5-phospho-D-ribosyl)imidazole-4-carboxamide: step 1/1. The protein is Bifunctional purine biosynthesis protein PurH of Haemophilus influenzae (strain ATCC 51907 / DSM 11121 / KW20 / Rd).